Reading from the N-terminus, the 558-residue chain is 2-isopropylmalate synthase (558 aa).

The 274-residue stretch at 30–303 (PIWCSVDLRD…DPKLDCSDIE (274 aa)) folds into the Pyruvate carboxyltransferase domain. The Mg(2+) site is built by Asp-39, His-242, His-244, and Asn-278. The regulatory domain stretch occupies residues 437 to 558 (QPGARIKFVD…ANRVLDVVGK (122 aa)).

The protein belongs to the alpha-IPM synthase/homocitrate synthase family. LeuA type 2 subfamily. In terms of assembly, homodimer. Mg(2+) is required as a cofactor.

Its subcellular location is the cytoplasm. It carries out the reaction 3-methyl-2-oxobutanoate + acetyl-CoA + H2O = (2S)-2-isopropylmalate + CoA + H(+). The protein operates within amino-acid biosynthesis; L-leucine biosynthesis; L-leucine from 3-methyl-2-oxobutanoate: step 1/4. Functionally, catalyzes the condensation of the acetyl group of acetyl-CoA with 3-methyl-2-oxobutanoate (2-ketoisovalerate) to form 3-carboxy-3-hydroxy-4-methylpentanoate (2-isopropylmalate). This chain is 2-isopropylmalate synthase, found in Rhizobium meliloti (strain 1021) (Ensifer meliloti).